Reading from the N-terminus, the 380-residue chain is Cytochrome b (380 aa).

The next 4 helical transmembrane spans lie at 34-54 (SGSL…FLAM), 78-99 (WFLR…YCHI), 114-134 (WNVG…GYVL), and 179-199 (FFPF…IHLV). Residues His-84 and His-98 each coordinate heme b. Residues His-183 and His-197 each contribute to the heme b site. His-202 lines the a ubiquinone pocket. 4 helical membrane passes run 227–247 (TKDT…ALLF), 289–309 (LGGV…PLLN), 321–341 (LSQA…WIGS), and 348–369 (YVLL…GFPI).

Belongs to the cytochrome b family. The main subunits of complex b-c1 are: cytochrome b, cytochrome c1 and the Rieske protein. The cofactor is heme b.

Its subcellular location is the mitochondrion inner membrane. In terms of biological role, component of the ubiquinol-cytochrome c reductase complex (complex III or cytochrome b-c1 complex) that is part of the mitochondrial respiratory chain. The b-c1 complex mediates electron transfer from ubiquinol to cytochrome c. Contributes to the generation of a proton gradient across the mitochondrial membrane that is then used for ATP synthesis. This is Cytochrome b (MT-CYB) from Strongylocentrotus purpuratus (Purple sea urchin).